A 379-amino-acid chain; its full sequence is uncharacterized protein (379 aa).

This is an uncharacterized protein from Sinorhizobium fredii (strain NBRC 101917 / NGR234).